The primary structure comprises 288 residues: 4-diphosphocytidyl-2-C-methyl-D-erythritol kinase (288 aa).

Lys-12 is a catalytic residue. 95–105 (PAGGGVGGGSS) contacts ATP. Asp-137 is a catalytic residue.

Belongs to the GHMP kinase family. IspE subfamily.

The enzyme catalyses 4-CDP-2-C-methyl-D-erythritol + ATP = 4-CDP-2-C-methyl-D-erythritol 2-phosphate + ADP + H(+). It participates in isoprenoid biosynthesis; isopentenyl diphosphate biosynthesis via DXP pathway; isopentenyl diphosphate from 1-deoxy-D-xylulose 5-phosphate: step 3/6. Catalyzes the phosphorylation of the position 2 hydroxy group of 4-diphosphocytidyl-2C-methyl-D-erythritol. In Halorhodospira halophila (strain DSM 244 / SL1) (Ectothiorhodospira halophila (strain DSM 244 / SL1)), this protein is 4-diphosphocytidyl-2-C-methyl-D-erythritol kinase.